The chain runs to 436 residues: MSSEKNYLNENYKSFFDDSLSVTDPELHKAISDELKRQQQHIELIASENIVSQAVLEAQGSVLTNKYAEGYPGKRYYNGCEHVDVAENLAIERLKKIFDCKFANAQPHSGAQANGAVFLALLNPGDTFMGMSLNSGGHITHGLKISMSGKWFNPIGYDVDKESELIDYDNVEKLALEHKPKLIICGGSAYSRVIDFKRFREIADKVGAYLMVDMAHFSGLVAGKGYPNPCEHAHVVTSTTHKVFRSARGGIILTNHEDLAKKFNTAVFPGYQGGPLMHVIAGKAAGFLEALRPDFKDYIKSVLANAKILSETLKNNGFKIYSGGTDTHLMLVDLRPFNVKGNAAAESLSNANITCNKNGIPFDSEKPMITSGIRLGTQAATTRGFGLKEFEKVGELITKVVKGLSENPEDNGKIEEEVRNEVIDLTSNFPIYKNLK.

(6S)-5,6,7,8-tetrahydrofolate is bound by residues L133 and 137 to 139; that span reads GHI. Position 242 is an N6-(pyridoxal phosphate)lysine (K242).

It belongs to the SHMT family. As to quaternary structure, homodimer. It depends on pyridoxal 5'-phosphate as a cofactor.

It localises to the cytoplasm. It catalyses the reaction (6R)-5,10-methylene-5,6,7,8-tetrahydrofolate + glycine + H2O = (6S)-5,6,7,8-tetrahydrofolate + L-serine. Its pathway is one-carbon metabolism; tetrahydrofolate interconversion. The protein operates within amino-acid biosynthesis; glycine biosynthesis; glycine from L-serine: step 1/1. Functionally, catalyzes the reversible interconversion of serine and glycine with tetrahydrofolate (THF) serving as the one-carbon carrier. This reaction serves as the major source of one-carbon groups required for the biosynthesis of purines, thymidylate, methionine, and other important biomolecules. Also exhibits THF-independent aldolase activity toward beta-hydroxyamino acids, producing glycine and aldehydes, via a retro-aldol mechanism. The protein is Serine hydroxymethyltransferase of Pelagibacter ubique (strain HTCC1062).